Consider the following 201-residue polypeptide: Musculin (201 aa).

Disordered regions lie at residues 1–108 (MSTG…NAAN) and 182–201 (RPDS…GTSA). Residues 46-56 (SAEEEDGEEEP) show a composition bias toward acidic residues. A Nuclear localization signal motif is present at residues 66-71 (KRKRLR). Over residues 74-86 (DAGGAGGRAGGAG) the composition is skewed to gly residues. Residues 102–154 (SQRNAANARERARMRVLSKAFSRLKTSLPWVPPDTKLSKLDTLRLASSYIAHL) enclose the bHLH domain.

Efficient DNA binding requires dimerization with another bHLH protein. Binds DNA as a homodimer or a heterodimer. Forms a heterodimer with TCF3.

The protein resides in the nucleus. In terms of biological role, transcription repressor that blocks myogenesis and activation of E-box dependent muscle genes. The sequence is that of Musculin (Msc) from Mus musculus (Mouse).